Consider the following 198-residue polypeptide: Large ribosomal subunit protein bL25 (198 aa).

It belongs to the bacterial ribosomal protein bL25 family. CTC subfamily. As to quaternary structure, part of the 50S ribosomal subunit; part of the 5S rRNA/L5/L18/L25 subcomplex. Contacts the 5S rRNA. Binds to the 5S rRNA independently of L5 and L18.

Its function is as follows. This is one of the proteins that binds to the 5S RNA in the ribosome where it forms part of the central protuberance. The polypeptide is Large ribosomal subunit protein bL25 (Pseudomonas putida (strain W619)).